The sequence spans 320 residues: Ferrochelatase (320 aa).

Residues histidine 194 and glutamate 275 each contribute to the Fe cation site.

Belongs to the ferrochelatase family. As to quaternary structure, monomer.

The protein resides in the cytoplasm. It carries out the reaction heme b + 2 H(+) = protoporphyrin IX + Fe(2+). It functions in the pathway porphyrin-containing compound metabolism; protoheme biosynthesis; protoheme from protoporphyrin-IX: step 1/1. In terms of biological role, catalyzes the ferrous insertion into protoporphyrin IX. This is Ferrochelatase from Escherichia coli O8 (strain IAI1).